A 233-amino-acid polypeptide reads, in one-letter code: B-cell lymphoma/leukemia 10 (233 aa).

N-acetylmethionine is present on M1. The 89-residue stretch at L13 to D101 folds into the CARD domain. Glycyl lysine isopeptide (Lys-Gly) (interchain with G-Cter in ubiquitin) cross-links involve residues K17, K31, and K63. A compositionally biased stretch (polar residues) spans T130–S141. Disordered stretches follow at residues T130–P149 and S186–Q233. S138 is modified (phosphoserine). Over residues P195–P205 the composition is skewed to pro residues.

As to quaternary structure, homomultimer; homooligomerized following recruitment by CARD domain-containing proteins that form a nucleating helical template that recruits BCL10 via CARD-CARD interaction. Self-associates by CARD-CARD interaction and interacts with other CARD-proteins such as CARD9, CARD10, CARD11 and CARD14. Forms a complex with CARD14 and MALT1; resulting in the formation of a CBM (CARD14-BCL10-MALT1) complex. Forms a complex with CARD11 and MALT1; resulting in the formation of a CBM (CARD11-BCL10-MALT1) complex. Forms a complex with CARD9 and MALT1; resulting in the formation of a CBM (CARD9-BCL10-MALT1) complex. Found in a membrane raft complex, at least composed of BCL10, CARD11, DPP4 and IKBKB. Binds caspase-9 with its C-terminal domain. Interacts with TRAF2 and BIRC2/c-IAP2. Interacts with PELI2 and SOCS3; these interactions may be mutually exclusive. Phosphorylated. Phosphorylation results in dissociation from TRAF2 and binding to BIRC2/c-IAP2. Phosphorylated by IKBKB/IKKB. Post-translationally, ubiquitinated via both 'Lys-63'-linked and linear ('Met-1'-linked) polyubiquitin chains in response to T-cell receptor (TCR) activation. Ubiquitination is recognized by IKBKG/NEMO, the regulatory subunit of I-kappa-B kinase (IKK), and is required for TCR-induced NF-kappa-B activation. Linear ubiquitination at Lys-17, Lys-31 and Lys-63 is mediated by RNF31/HOIP; linear ubiquitination is recognized with much higher affinity than 'Lys-63'-linked ubiquitin by IKBKG/NEMO. CARD11 is required for linear ubiquitination by HOIP by promoting the targeting of BCL10 to RNF31/HOIP. In terms of processing, proteolytically cleaved by MALT1; required for T-cell activation.

The protein resides in the cytoplasm. Its subcellular location is the perinuclear region. It localises to the membrane raft. Plays a key role in both adaptive and innate immune signaling by bridging CARD domain-containing proteins to immune activation. Acts by channeling adaptive and innate immune signaling downstream of CARD domain-containing proteins CARD9, CARD11 and CARD14 to activate NF-kappa-B and MAP kinase p38 (MAPK11, MAPK12, MAPK13 and/or MAPK14) pathways which stimulate expression of genes encoding pro-inflammatory cytokines and chemokines. Recruited by activated CARD domain-containing proteins: homooligomerized CARD domain-containing proteins form a nucleating helical template that recruits BCL10 via CARD-CARD interaction, thereby promoting polymerization of BCL10, subsequent recruitment of MALT1 and formation of a CBM complex. This leads to activation of NF-kappa-B and MAP kinase p38 (MAPK11, MAPK12, MAPK13 and/or MAPK14) pathways which stimulate expression of genes encoding pro-inflammatory cytokines and chemokines. Activated by CARD9 downstream of C-type lectin receptors; CARD9-mediated signals are essential for antifungal immunity. Activated by CARD11 downstream of T-cell receptor (TCR) and B-cell receptor (BCR). Promotes apoptosis, pro-caspase-9 maturation and activation of NF-kappa-B via NIK and IKK. This chain is B-cell lymphoma/leukemia 10, found in Rattus norvegicus (Rat).